Consider the following 782-residue polypeptide: Ribosome biogenesis protein ERB1 (782 aa).

Positions 1–11 (MSVNSRKRKVA) are enriched in basic residues. Residues 1-120 (MSVNSRKRKV…LEGEEDESLK (120 aa)) form a disordered region. 2 stretches are compositionally biased toward acidic residues: residues 39 to 51 (DESEDDQDAEDTD) and 59 to 75 (LSDEDFEDEEDSGDEAE). The span at 82–92 (RNLNTSGGSQQ) shows a compositional bias: polar residues. Residues 106–117 (GADGELEGEEDE) are compositionally biased toward acidic residues. WD repeat units follow at residues 432-471 (GQEGRVRCVSVDPQGIFVASGGDDGYVRIWELLTGRQVWN) and 475-516 (SDEE…PDVE). The segment at 533–556 (KPSTAANGEAPKQSPGKWSRPGSR) is disordered. 4 WD repeats span residues 612–652 (RLKG…KILQ), 653–692 (PGAKWISSIDVHPGGDNIIVGTYDKRLLWHDLDLSNKPYK), 696–736 (FHKE…DLME), and 752–782 (KSRLGVMDLDWHPREPWCVSAGADGTLRLWN).

The protein belongs to the WD repeat BOP1/ERB1 family. In terms of assembly, component of the NOP7 complex, composed of ERB1, NOP7 and YTM1. The complex is held together by ERB1, which interacts with NOP7 via its N-terminal domain and with YTM1 via a high-affinity interaction between the seven-bladed beta-propeller domains of the 2 proteins. The NOP7 complex associates with the 66S pre-ribosome.

The protein resides in the nucleus. Its subcellular location is the nucleolus. It is found in the nucleoplasm. Functionally, component of the NOP7 complex, which is required for maturation of the 25S and 5.8S ribosomal RNAs and formation of the 60S ribosome. The protein is Ribosome biogenesis protein ERB1 of Phaeosphaeria nodorum (strain SN15 / ATCC MYA-4574 / FGSC 10173) (Glume blotch fungus).